Here is a 380-residue protein sequence, read N- to C-terminus: Chaperone protein DnaJ 2 (380 aa).

The region spanning 10 to 75 (DYYKILGVSK…KKRKEYDQAR (66 aa)) is the J domain. Residues 32-56 (KIARDNHPDSHPGDKAAEARFKEAS) are compositionally biased toward basic and acidic residues. Residues 32 to 63 (KIARDNHPDSHPGDKAAEARFKEASEANDVLS) form a disordered region. The CR-type zinc finger occupies 151–230 (GTTVTMDMVS…CHGSGRAKST (80 aa)). Residues cysteine 164, cysteine 167, cysteine 181, cysteine 184, cysteine 204, cysteine 207, cysteine 218, and cysteine 221 each coordinate Zn(2+). 4 CXXCXGXG motif repeats span residues 164-171 (CQACRGTG), 181-188 (CSTCQGSG), 204-211 (CPDCHGRG), and 218-225 (CQVCHGSG).

The protein belongs to the DnaJ family. Homodimer. It depends on Zn(2+) as a cofactor.

The protein localises to the cytoplasm. Functionally, participates actively in the response to hyperosmotic and heat shock by preventing the aggregation of stress-denatured proteins and by disaggregating proteins, also in an autonomous, DnaK-independent fashion. Unfolded proteins bind initially to DnaJ; upon interaction with the DnaJ-bound protein, DnaK hydrolyzes its bound ATP, resulting in the formation of a stable complex. GrpE releases ADP from DnaK; ATP binding to DnaK triggers the release of the substrate protein, thus completing the reaction cycle. Several rounds of ATP-dependent interactions between DnaJ, DnaK and GrpE are required for fully efficient folding. Also involved, together with DnaK and GrpE, in the DNA replication of plasmids through activation of initiation proteins. The sequence is that of Chaperone protein DnaJ 2 from Cutibacterium acnes (strain DSM 16379 / KPA171202) (Propionibacterium acnes).